Here is a 236-residue protein sequence, read N- to C-terminus: Opacity protein opA50 (236 aa).

Residue Ala1 is a signal peptide.

The protein belongs to the opacity porin family.

The protein localises to the cell outer membrane. Its function is as follows. Implicated in a number of adherence functions. OPA proteins are implicated in pathogenesis and are subject to phase variation. This is Opacity protein opA50 (opaC) from Neisseria gonorrhoeae.